Reading from the N-terminus, the 407-residue chain is GTPase Obg (407 aa).

The region spanning 1–159 (MKFVDEVSIR…RDLKLELKVL (159 aa)) is the Obg domain. The segment at 127–149 (NTRFKSSTNRAPRQTTPGKPGDQ) is disordered. The segment covering 129 to 143 (RFKSSTNRAPRQTTP) has biased composition (polar residues). In terms of domain architecture, OBG-type G spans 160-333 (ADVGLLGLPN…LTRDIMRYLE (174 aa)). GTP is bound by residues 166-173 (GLPNAGKS), 191-195 (FTTLV), 213-216 (DIPG), 283-286 (NKCD), and 314-316 (SAI). Positions 173 and 193 each coordinate Mg(2+). The disordered stretch occupies residues 376 to 407 (SGVKSVHDIGDDDWDEEDVDDEDGPEIIYVRD). A compositionally biased stretch (acidic residues) spans 385 to 400 (GDDDWDEEDVDDEDGP).

This sequence belongs to the TRAFAC class OBG-HflX-like GTPase superfamily. OBG GTPase family. In terms of assembly, monomer. Requires Mg(2+) as cofactor.

The protein resides in the cytoplasm. Functionally, an essential GTPase which binds GTP, GDP and possibly (p)ppGpp with moderate affinity, with high nucleotide exchange rates and a fairly low GTP hydrolysis rate. Plays a role in control of the cell cycle, stress response, ribosome biogenesis and in those bacteria that undergo differentiation, in morphogenesis control. This Pseudomonas savastanoi pv. phaseolicola (strain 1448A / Race 6) (Pseudomonas syringae pv. phaseolicola (strain 1448A / Race 6)) protein is GTPase Obg.